Consider the following 55-residue polypeptide: Large ribosomal subunit protein bL33 (55 aa).

The protein belongs to the bacterial ribosomal protein bL33 family.

This chain is Large ribosomal subunit protein bL33, found in Buchnera aphidicola subsp. Acyrthosiphon pisum (strain 5A).